The sequence spans 325 residues: L-lactate dehydrogenase (325 aa).

NAD(+) contacts are provided by residues V19, D40, K45, Y70, and 84–85 (GA). Substrate is bound by residues Q87 and R93. NAD(+)-binding positions include T106, 123-125 (AAN), and S148. 125-128 (NPVD) contacts substrate. 153–156 (DSAR) is a binding site for substrate. Residues R158 and H173 each coordinate beta-D-fructose 1,6-bisphosphate. H180 functions as the Proton acceptor in the catalytic mechanism. Phosphotyrosine is present on Y225. A substrate-binding site is contributed by T234.

Belongs to the LDH/MDH superfamily. LDH family. In terms of assembly, homotetramer.

It is found in the cytoplasm. It catalyses the reaction (S)-lactate + NAD(+) = pyruvate + NADH + H(+). It functions in the pathway fermentation; pyruvate fermentation to lactate; (S)-lactate from pyruvate: step 1/1. Its activity is regulated as follows. Allosterically activated by fructose 1,6-bisphosphate (FBP). Catalyzes the conversion of lactate to pyruvate. This Latilactobacillus sakei subsp. sakei (strain 23K) (Lactobacillus sakei subsp. sakei) protein is L-lactate dehydrogenase.